The sequence spans 449 residues: Glutamyl-tRNA reductase (449 aa).

Residues 58–61 (TCNR), S121, 126–128 (ETQ), and Q132 each bind substrate. C59 functions as the Nucleophile in the catalytic mechanism. 203–208 (GLGEMA) is a binding site for NADP(+).

Belongs to the glutamyl-tRNA reductase family. In terms of assembly, homodimer.

It catalyses the reaction (S)-4-amino-5-oxopentanoate + tRNA(Glu) + NADP(+) = L-glutamyl-tRNA(Glu) + NADPH + H(+). The protein operates within porphyrin-containing compound metabolism; protoporphyrin-IX biosynthesis; 5-aminolevulinate from L-glutamyl-tRNA(Glu): step 1/2. Catalyzes the NADPH-dependent reduction of glutamyl-tRNA(Glu) to glutamate 1-semialdehyde (GSA). The chain is Glutamyl-tRNA reductase from Helicobacter pylori (strain HPAG1).